A 97-amino-acid chain; its full sequence is Small ribosomal subunit protein bS20 (97 aa).

The protein belongs to the bacterial ribosomal protein bS20 family.

Functionally, binds directly to 16S ribosomal RNA. This Synechocystis sp. (strain ATCC 27184 / PCC 6803 / Kazusa) protein is Small ribosomal subunit protein bS20.